The chain runs to 1217 residues: ATP-dependent helicase/nuclease subunit A (1217 aa).

One can recognise a UvrD-like helicase ATP-binding domain in the interval 10–475 (VIWTDAQWQS…IDLSQNFRSR (466 aa)). ATP is bound at residue 31 to 38 (AAAGSGKT). The 311-residue stretch at 476–786 (KEVLSTTNYI…RMMTIHSSKG (311 aa)) folds into the UvrD-like helicase C-terminal domain.

This sequence belongs to the helicase family. AddA subfamily. As to quaternary structure, heterodimer of AddA and AddB/RexB. The cofactor is Mg(2+).

It catalyses the reaction Couples ATP hydrolysis with the unwinding of duplex DNA by translocating in the 3'-5' direction.. It carries out the reaction ATP + H2O = ADP + phosphate + H(+). The heterodimer acts as both an ATP-dependent DNA helicase and an ATP-dependent, dual-direction single-stranded exonuclease. Recognizes the chi site generating a DNA molecule suitable for the initiation of homologous recombination. The AddA nuclease domain is required for chi fragment generation; this subunit has the helicase and 3' -&gt; 5' nuclease activities. This is ATP-dependent helicase/nuclease subunit A from Staphylococcus aureus (strain NCTC 8325 / PS 47).